Reading from the N-terminus, the 264-residue chain is 3-methyl-2-oxobutanoate hydroxymethyltransferase (264 aa).

The Mg(2+) site is built by aspartate 45 and aspartate 84. 3-methyl-2-oxobutanoate is bound by residues 45–46, aspartate 84, and lysine 112; that span reads DS. Position 114 (glutamate 114) interacts with Mg(2+). The active-site Proton acceptor is glutamate 181.

The protein belongs to the PanB family. In terms of assembly, homodecamer; pentamer of dimers. Requires Mg(2+) as cofactor.

It localises to the cytoplasm. It catalyses the reaction 3-methyl-2-oxobutanoate + (6R)-5,10-methylene-5,6,7,8-tetrahydrofolate + H2O = 2-dehydropantoate + (6S)-5,6,7,8-tetrahydrofolate. The protein operates within cofactor biosynthesis; (R)-pantothenate biosynthesis; (R)-pantoate from 3-methyl-2-oxobutanoate: step 1/2. Catalyzes the reversible reaction in which hydroxymethyl group from 5,10-methylenetetrahydrofolate is transferred onto alpha-ketoisovalerate to form ketopantoate. The protein is 3-methyl-2-oxobutanoate hydroxymethyltransferase of Shigella flexneri serotype 5b (strain 8401).